Reading from the N-terminus, the 154-residue chain is 6,7-dimethyl-8-ribityllumazine synthase (154 aa).

Residues Phe22, 56–58, and 80–82 each bind 5-amino-6-(D-ribitylamino)uracil; these read AFE and AVI. 85–86 lines the (2S)-2-hydroxy-3-oxobutyl phosphate pocket; that stretch reads AT. His88 serves as the catalytic Proton donor. Phe113 contributes to the 5-amino-6-(D-ribitylamino)uracil binding site. Arg127 is a (2S)-2-hydroxy-3-oxobutyl phosphate binding site.

It belongs to the DMRL synthase family.

The enzyme catalyses (2S)-2-hydroxy-3-oxobutyl phosphate + 5-amino-6-(D-ribitylamino)uracil = 6,7-dimethyl-8-(1-D-ribityl)lumazine + phosphate + 2 H2O + H(+). It functions in the pathway cofactor biosynthesis; riboflavin biosynthesis; riboflavin from 2-hydroxy-3-oxobutyl phosphate and 5-amino-6-(D-ribitylamino)uracil: step 1/2. Catalyzes the formation of 6,7-dimethyl-8-ribityllumazine by condensation of 5-amino-6-(D-ribitylamino)uracil with 3,4-dihydroxy-2-butanone 4-phosphate. This is the penultimate step in the biosynthesis of riboflavin. The polypeptide is 6,7-dimethyl-8-ribityllumazine synthase (Agathobacter rectalis (strain ATCC 33656 / DSM 3377 / JCM 17463 / KCTC 5835 / VPI 0990) (Eubacterium rectale)).